The sequence spans 395 residues: Cystathionine beta-lyase (395 aa).

Lysine 210 is modified (N6-(pyridoxal phosphate)lysine).

The protein belongs to the trans-sulfuration enzymes family. As to quaternary structure, homotetramer. The cofactor is pyridoxal 5'-phosphate.

Its subcellular location is the cytoplasm. The enzyme catalyses L,L-cystathionine + H2O = L-homocysteine + pyruvate + NH4(+). It catalyses the reaction an S-substituted L-cysteine + H2O = a thiol + pyruvate + NH4(+). Its pathway is amino-acid biosynthesis; L-methionine biosynthesis via de novo pathway; L-homocysteine from L-cystathionine: step 1/1. Catalyzes the cleavage of cystathionine to homocysteine, pyruvate and ammonia during methionine biosynthesis. The polypeptide is Cystathionine beta-lyase (metC) (Salmonella typhimurium (strain LT2 / SGSC1412 / ATCC 700720)).